Consider the following 726-residue polypeptide: Dipeptidyl-peptidase 5 (726 aa).

The first 19 residues, 1–19 (MAPAKWLIASLAFASTGLA), serve as a signal peptide directing secretion. 2 N-linked (GlcNAc...) asparagine glycosylation sites follow: Asn96 and Asn252. Residues 268–292 (VAEPINKRNGPRTPHGIEGASSSPV) are disordered. The N-linked (GlcNAc...) asparagine glycan is linked to Asn485. Ser558 acts as the Charge relay system in catalysis. A glycan (N-linked (GlcNAc...) asparagine) is linked at Asn605. Catalysis depends on charge relay system residues Asp641 and His673. N-linked (GlcNAc...) asparagine glycosylation is present at Asn699.

Belongs to the peptidase S9C family.

Its subcellular location is the secreted. Extracellular dipeptidyl-peptidase which removes N-terminal dipeptides sequentially from polypeptides having unsubstituted N-termini. Contributes to pathogenicity. This is Dipeptidyl-peptidase 5 (DPP5) from Arthroderma otae (Microsporum canis).